Consider the following 77-residue polypeptide: Translation initiation factor IF-1, chloroplastic (77 aa).

The S1-like domain maps to 1-72 (MRKQNLIEME…TKGRITYRLR (72 aa)).

Belongs to the IF-1 family. As to quaternary structure, component of the 30S ribosomal translation pre-initiation complex which assembles on the 30S ribosome in the order IF-2 and IF-3, IF-1 and N-formylmethionyl-tRNA(fMet); mRNA recruitment can occur at any time during PIC assembly.

The protein resides in the plastid. It localises to the chloroplast. In terms of biological role, one of the essential components for the initiation of protein synthesis. Stabilizes the binding of IF-2 and IF-3 on the 30S subunit to which N-formylmethionyl-tRNA(fMet) subsequently binds. Helps modulate mRNA selection, yielding the 30S pre-initiation complex (PIC). Upon addition of the 50S ribosomal subunit IF-1, IF-2 and IF-3 are released leaving the mature 70S translation initiation complex. In Staurastrum punctulatum (Green alga), this protein is Translation initiation factor IF-1, chloroplastic.